Reading from the N-terminus, the 118-residue chain is Large ribosomal subunit protein bL20 (118 aa).

The protein belongs to the bacterial ribosomal protein bL20 family.

Its function is as follows. Binds directly to 23S ribosomal RNA and is necessary for the in vitro assembly process of the 50S ribosomal subunit. It is not involved in the protein synthesizing functions of that subunit. The protein is Large ribosomal subunit protein bL20 of Yersinia enterocolitica serotype O:8 / biotype 1B (strain NCTC 13174 / 8081).